The chain runs to 418 residues: Aminodeoxyfutalosine deaminase (418 aa).

Zn(2+)-binding residues include His-97 and His-99. The substrate site is built by Glu-173 and His-211. Residue His-238 coordinates Zn(2+). Glu-241 acts as the Proton donor in catalysis. Asp-352 lines the Zn(2+) pocket.

It belongs to the metallo-dependent hydrolases superfamily. Requires Zn(2+) as cofactor.

It catalyses the reaction 6-amino-6-deoxyfutalosine + H2O + H(+) = futalosine + NH4(+). The protein operates within quinol/quinone metabolism; menaquinone biosynthesis. Its function is as follows. Catalyzes the deamination of aminodeoxyfutalosine (AFL) into futalosine (FL). To a lesser extent, can also deaminate 5'-deoxyadenosine, 5'-methylthioadenosine, 2'-deoxyadenosine, adenosine, 1-(6-amino-9H-purin-9-yl)-1-deoxy-N-ethyl-beta-D-ribofuranuronamide (NECA), and S-adenosylhomocysteine. This chain is Aminodeoxyfutalosine deaminase, found in Deinococcus radiodurans (strain ATCC 13939 / DSM 20539 / JCM 16871 / CCUG 27074 / LMG 4051 / NBRC 15346 / NCIMB 9279 / VKM B-1422 / R1).